The following is a 348-amino-acid chain: Dihydroorotase (348 aa).

H17 and H19 together coordinate Zn(2+). Substrate is bound by residues 19–21 (HLR) and N45. Zn(2+)-binding residues include K103, H140, and H178. Position 103 is an N6-carboxylysine (K103). Residue H140 coordinates substrate. Residue L223 coordinates substrate. D251 lines the Zn(2+) pocket. The active site involves D251. Substrate contacts are provided by H255 and A267.

This sequence belongs to the metallo-dependent hydrolases superfamily. DHOase family. Class II DHOase subfamily. As to quaternary structure, homodimer. It depends on Zn(2+) as a cofactor.

It carries out the reaction (S)-dihydroorotate + H2O = N-carbamoyl-L-aspartate + H(+). Its pathway is pyrimidine metabolism; UMP biosynthesis via de novo pathway; (S)-dihydroorotate from bicarbonate: step 3/3. Functionally, catalyzes the reversible cyclization of carbamoyl aspartate to dihydroorotate. The chain is Dihydroorotase from Salmonella dublin (strain CT_02021853).